The following is a 142-amino-acid chain: Putative pre-16S rRNA nuclease (142 aa).

The protein belongs to the YqgF nuclease family.

The protein resides in the cytoplasm. In terms of biological role, could be a nuclease involved in processing of the 5'-end of pre-16S rRNA. This is Putative pre-16S rRNA nuclease from Ruminiclostridium cellulolyticum (strain ATCC 35319 / DSM 5812 / JCM 6584 / H10) (Clostridium cellulolyticum).